Consider the following 173-residue polypeptide: Protein tyrosine phosphatase type IVA 3 (173 aa).

The region spanning Ala-8–Lys-161 is the Tyrosine-protein phosphatase domain. Residues Cys-49 and Cys-104 are joined by a disulfide bond. Asp-72 functions as the Proton donor in the catalytic mechanism. Residue Cys-104 is the Phosphocysteine intermediate of the active site. A substrate-binding site is contributed by Arg-110. Position 170 is a cysteine methyl ester (Cys-170). Cys-170 is lipidated: S-farnesyl cysteine. Positions Cys-171–Met-173 are cleaved as a propeptide — removed in mature form.

This sequence belongs to the protein-tyrosine phosphatase family. In terms of assembly, interacts with tubulin. Farnesylated. Farnesylation is required for membrane targeting. Unfarnesylated forms are shifted into the nucleus. In terms of tissue distribution, present in the small intestine, where it is located in the differentiated epithelial cells of the villus but not in the proliferating crypt cells (at protein level). Expressed in heart and skeletal muscle, and at lower levels in lung, spleen and testis.

It localises to the cell membrane. The protein localises to the early endosome. The catalysed reaction is O-phospho-L-tyrosyl-[protein] + H2O = L-tyrosyl-[protein] + phosphate. Inhibited by sodium orthovanadate and peroxovanadium compounds, and by pentamidine. In terms of biological role, protein tyrosine phosphatase which stimulates progression from G1 into S phase during mitosis. Enhances cell proliferation, cell motility and invasive activity, and promotes cancer metastasis. May be involved in the progression of cardiac hypertrophy by inhibiting intracellular calcium mobilization in response to angiotensin II. The sequence is that of Protein tyrosine phosphatase type IVA 3 (Ptp4a3) from Mus musculus (Mouse).